The primary structure comprises 499 residues: UTP--glucose-1-phosphate uridylyltransferase (499 aa).

Position 2 is an N-acetylserine (Ser2). At Ser17 the chain carries Phosphoserine. The residue at position 19 (Thr19) is a Phosphothreonine. 2 positions are modified to phosphoserine: Ser21 and Ser79. UTP-binding positions include 109-112 (LNGG), Lys123, Gln186, and Gly215. 111 to 112 (GG) contacts substrate. Lys123 lines the Mg(2+) pocket. Substrate contacts are provided by residues His216 and 244-246 (NGD). Asp246 lines the UTP pocket. A Mg(2+)-binding site is contributed by Asp246. Arg369 carries the post-translational modification Omega-N-methylarginine. Lys388 contacts UTP. Residue Lys388 is part of the active site. The oligomerization stretch occupies residues 448–499 (HLTITGNVFLGKDVTLRGTVIIVCSDGHKIDIPNGSILENVVVTGNLQILEH).

Belongs to the UDPGP type 1 family. In terms of assembly, homooctamer.

The enzyme catalyses alpha-D-glucose 1-phosphate + UTP + H(+) = UDP-alpha-D-glucose + diphosphate. Plays a central role as a glucosyl donor in cellular metabolic pathways. The sequence is that of UTP--glucose-1-phosphate uridylyltransferase from Saccharomyces cerevisiae (strain ATCC 204508 / S288c) (Baker's yeast).